Here is a 592-residue protein sequence, read N- to C-terminus: 1,4-alpha-glucan branching enzyme GlgB 2 (592 aa).

Catalysis depends on Asp-274, which acts as the Nucleophile. Residue Glu-327 is the Proton donor of the active site.

It belongs to the glycosyl hydrolase 13 family. GlgB subfamily. Monomer.

It catalyses the reaction Transfers a segment of a (1-&gt;4)-alpha-D-glucan chain to a primary hydroxy group in a similar glucan chain.. It participates in glycan biosynthesis; glycogen biosynthesis. Its function is as follows. Catalyzes the formation of the alpha-1,6-glucosidic linkages in glycogen by scission of a 1,4-alpha-linked oligosaccharide from growing alpha-1,4-glucan chains and the subsequent attachment of the oligosaccharide to the alpha-1,6 position. The protein is 1,4-alpha-glucan branching enzyme GlgB 2 of Streptomyces avermitilis (strain ATCC 31267 / DSM 46492 / JCM 5070 / NBRC 14893 / NCIMB 12804 / NRRL 8165 / MA-4680).